Consider the following 271-residue polypeptide: Tryptophan synthase alpha chain (271 aa).

Active-site proton acceptor residues include E49 and D60.

It belongs to the TrpA family. As to quaternary structure, tetramer of two alpha and two beta chains.

It carries out the reaction (1S,2R)-1-C-(indol-3-yl)glycerol 3-phosphate + L-serine = D-glyceraldehyde 3-phosphate + L-tryptophan + H2O. It functions in the pathway amino-acid biosynthesis; L-tryptophan biosynthesis; L-tryptophan from chorismate: step 5/5. In terms of biological role, the alpha subunit is responsible for the aldol cleavage of indoleglycerol phosphate to indole and glyceraldehyde 3-phosphate. The chain is Tryptophan synthase alpha chain from Burkholderia cenocepacia (strain HI2424).